Reading from the N-terminus, the 153-residue chain is Histone H2B.3 (153 aa).

Composition is skewed to basic and acidic residues over residues methionine 1–leucine 28 and glutamate 36–lysine 53. A disordered region spans residues methionine 1–lysine 61. 2 positions are modified to N6-acetyllysine: lysine 7 and lysine 37. A Glycyl lysine isopeptide (Lys-Gly) (interchain with G-Cter in ubiquitin) cross-link involves residue lysine 149.

Belongs to the histone H2B family. In terms of assembly, the nucleosome is a histone octamer containing two molecules each of H2A, H2B, H3 and H4 assembled in one H3-H4 heterotetramer and two H2A-H2B heterodimers. The octamer wraps approximately 147 bp of DNA. Can be acetylated to form H2BK6ac and H2BK33ac. Post-translationally, monoubiquitinated by BRE1 to form H2BK143ub1 and deubiquitinated by UBP26. Required for heterochromatic histone H3 di- and trimethylation at H3K4me. May give a specific tag for epigenetic transcriptional activation.

The protein resides in the nucleus. The protein localises to the chromosome. In terms of biological role, core component of nucleosome. Nucleosomes wrap and compact DNA into chromatin, limiting DNA accessibility to the cellular machineries which require DNA as a template. Histones thereby play a central role in transcription regulation, DNA repair, DNA replication and chromosomal stability. DNA accessibility is regulated via a complex set of post-translational modifications of histones, also called histone code, and nucleosome remodeling. This Oryza sativa subsp. indica (Rice) protein is Histone H2B.3 (H2B.3).